The chain runs to 160 residues: UPF0260 protein Rleg2_0895 (160 aa).

This sequence belongs to the UPF0260 family.

This Rhizobium leguminosarum bv. trifolii (strain WSM2304) protein is UPF0260 protein Rleg2_0895.